A 102-amino-acid polypeptide reads, in one-letter code: ATP-dependent Clp protease adapter protein ClpS (102 aa).

Belongs to the ClpS family. As to quaternary structure, binds to the N-terminal domain of the chaperone ClpA.

Its function is as follows. Involved in the modulation of the specificity of the ClpAP-mediated ATP-dependent protein degradation. The protein is ATP-dependent Clp protease adapter protein ClpS of Shewanella sp. (strain ANA-3).